The sequence spans 309 residues: Olfactory receptor 7A40 (309 aa).

Residues 1–26 (MELKNDTQISKFILLGISEDPLWQPF) lie on the Extracellular side of the membrane. Asn5 carries N-linked (GlcNAc...) asparagine glycosylation. The chain crosses the membrane as a helical span at residues 27-47 (LFGLFLFMYLVTLLGNLLIII). The Cytoplasmic portion of the chain corresponds to 48 to 57 (ATITDSHLHT). Residues 58–78 (PMYFFLSNLSFADICFTSASI) form a helical membrane-spanning segment. At 79 to 97 (PKMLVNIQTKNKVITYEGC) the chain is on the extracellular side. The cysteines at positions 97 and 179 are disulfide-linked. Residues 98-118 (ISQVFFFILFGVLDNFLLAVM) form a helical membrane-spanning segment. The Cytoplasmic portion of the chain corresponds to 119–139 (AYDRYVAICHPLHYMVIMNCR). A helical membrane pass occupies residues 140-160 (LCGFLVLGSWVTTALNSLLQS). Residues 161–196 (SMALRLSFCTDLKIPHFVCELNQLVLLACNDTFPND) are Extracellular-facing. A helical membrane pass occupies residues 197 to 217 (MVMYFAAILLGGGPLAGILYS). Over 218–244 (YSKIVSSIRAISSSQGKYKAFSTCASH) the chain is Cytoplasmic. The helical transmembrane segment at 245 to 265 (LSVVSLFYSTLLGVYLSSSFT) threads the bilayer. Residues 266-269 (QNSH) lie on the Extracellular side of the membrane. A helical membrane pass occupies residues 270-292 (STARASVMYSVVTPMLNPFIYSL). Residues 293 to 309 (RNKDLMGALRRLLRRKS) lie on the Cytoplasmic side of the membrane.

It belongs to the G-protein coupled receptor 1 family.

It is found in the cell membrane. Its function is as follows. Odorant receptor. This Mus musculus (Mouse) protein is Olfactory receptor 7A40.